Here is a 1902-residue protein sequence, read N- to C-terminus: Plexin-B3 (1902 aa).

An N-terminal signal peptide occupies residues 1-34; the sequence is MLTDFLQAPVMAPWSPFSLHLLLLFLLLLPLTRA. The region spanning 35–461 is the Sema domain; sequence HRFSVPNASF…TAQQVDRILV (427 aa). Over 35–1245 the chain is Extracellular; sequence HRFSVPNASF…MISTFPVEAQ (1211 aa). N-linked (GlcNAc...) asparagine glycosylation is present at asparagine 41. Intrachain disulfides connect cysteine 88–cysteine 97 and cysteine 122–cysteine 130. N-linked (GlcNAc...) asparagine glycosylation occurs at asparagine 221. Cystine bridges form between cysteine 257-cysteine 360, cysteine 273-cysteine 305, and cysteine 323-cysteine 347. The disordered stretch occupies residues 353 to 372; sequence DSPESYPCGDEHTPSPIAGR. 2 N-linked (GlcNAc...) asparagine glycosylation sites follow: asparagine 416 and asparagine 469. Residues 463 to 515 form the PSI 1 domain; that stretch reads ACPQFPNCTTCLQARDPLCGWCILQGRCTRRAECGRAVQPNQWLWSYEDNHCL. 5 cysteine pairs are disulfide-bonded: cysteine 464/cysteine 481, cysteine 470/cysteine 514, cysteine 473/cysteine 490, cysteine 484/cysteine 496, and cysteine 551/cysteine 569. 2 PSI domains span residues 609–671 and 776–822; these read DCSA…EACP and DCAM…QLCP. N-linked (GlcNAc...) asparagine glycosylation is found at asparagine 791, asparagine 889, asparagine 946, asparagine 1090, and asparagine 1207. IPT/TIG domains lie at 824 to 913, 915 to 1001, and 1003 to 1134; these read PSID…HFTY, DPVL…FRYT, and NPQL…FLYQ. Residues 1246–1266 traverse the membrane as a helical segment; it reads VGLGMGAAMLIAAVLLLTLMY. The Cytoplasmic portion of the chain corresponds to 1267–1902; that stretch reads RHKSKQALRD…ALVEYKVTDL (636 aa).

It belongs to the plexin family. Binds MET and MST1R. Interacts with RIT2/RIN. Interacts (via cytoplasmic domain) with FSCN1 and RAC1. May form homodimers (via Sema domain). Interacts (via cytoplasmic domain) with ARHGDIA. In terms of tissue distribution, expressed in glioma cells (at protein level). Expressed in glioma cells and oligodendrocyte precursor cells.

The protein resides in the cell membrane. Receptor for SEMA5A that plays a role in axon guidance, invasive growth and cell migration. Stimulates neurite outgrowth and mediates Ca(2+)/Mg(2+)-dependent cell aggregation. In glioma cells, SEMA5A stimulation of PLXNB3 results in the disassembly of F-actin stress fibers, disruption of focal adhesions and cellular collapse as well as inhibition of cell migration and invasion through ARHGDIA-mediated inactivation of RAC1. This chain is Plexin-B3 (Plxnb3), found in Rattus norvegicus (Rat).